The primary structure comprises 416 residues: Serine hydroxymethyltransferase (416 aa).

(6S)-5,6,7,8-tetrahydrofolate-binding positions include Leu-118 and 122 to 124 (GHL). Residue Lys-226 is modified to N6-(pyridoxal phosphate)lysine. 350–352 (SPF) contributes to the (6S)-5,6,7,8-tetrahydrofolate binding site.

Belongs to the SHMT family. Homodimer. It depends on pyridoxal 5'-phosphate as a cofactor.

It is found in the cytoplasm. The catalysed reaction is (6R)-5,10-methylene-5,6,7,8-tetrahydrofolate + glycine + H2O = (6S)-5,6,7,8-tetrahydrofolate + L-serine. Its pathway is one-carbon metabolism; tetrahydrofolate interconversion. It functions in the pathway amino-acid biosynthesis; glycine biosynthesis; glycine from L-serine: step 1/1. Catalyzes the reversible interconversion of serine and glycine with tetrahydrofolate (THF) serving as the one-carbon carrier. This reaction serves as the major source of one-carbon groups required for the biosynthesis of purines, thymidylate, methionine, and other important biomolecules. Also exhibits THF-independent aldolase activity toward beta-hydroxyamino acids, producing glycine and aldehydes, via a retro-aldol mechanism. The protein is Serine hydroxymethyltransferase of Sulfurovum sp. (strain NBC37-1).